A 192-amino-acid polypeptide reads, in one-letter code: Cell division protein SepF (192 aa).

Residues 154 to 192 (QEEPAPSNVTTTTQQSEETISESVTAPEPAWGTPVASAI) form a disordered region. Residues 162–178 (VTTTTQQSEETISESVT) are compositionally biased toward low complexity.

The protein belongs to the SepF family. Homodimer. Interacts with FtsZ.

Its subcellular location is the cytoplasm. Its function is as follows. Cell division protein that is part of the divisome complex and is recruited early to the Z-ring. Probably stimulates Z-ring formation, perhaps through the cross-linking of FtsZ protofilaments. Its function overlaps with FtsA. The protein is Cell division protein SepF of Prochlorococcus marinus (strain MIT 9211).